The following is a 404-amino-acid chain: Glycosyltransferase GlyB (404 aa).

The tract at residues 1–267 (MNTKSIVFNA…ILLRKDIISR (267 aa)) is GT8 domain. Residues 9–14 (NADNDY) and 103–104 (DS) each bind UDP. Positions 103, 105, and 228 each coordinate Mn(2+). UDP is bound at residue 228–233 (HYTGVK).

This sequence in the N-terminal section; belongs to the glycosyltransferase 8 family.

Its function is as follows. May be involved in the polymorphic O-glycosylation of the serine-rich repeat protein PsrP. Has equal hydrolytic activity against both UDP-galactose and UDP-glucose; no glycosyltransferase activity has been seen with tested substrates. The polypeptide is Glycosyltransferase GlyB (Streptococcus pneumoniae serotype 4 (strain ATCC BAA-334 / TIGR4)).